The primary structure comprises 2694 residues: Teneurin-3 (2694 aa).

Disordered regions lie at residues 1–45, 106–132, and 161–198; these read MDVK…SSSE, PSSL…DNQS, and TQPA…PSVT. The Teneurin N-terminal domain maps to 1-306; the sequence is MDVKERRPYC…KSSKYCSWRC (306 aa). Over 1–312 the chain is Cytoplasmic; that stretch reads MDVKERRPYC…SWRCTALSAM (312 aa). A compositionally biased stretch (polar residues) spans 163–184; that stretch reads PAPSHSCNEQPSNQHQQGQSTL. The chain crosses the membrane as a helical span at residues 313–333; that stretch reads AVSILLSVLLCYCIAMHLFGL. The Extracellular segment spans residues 334–2694; it reads NWQLQETEGY…FLRQSEIGKR (2361 aa). Asn-374 and Asn-413 each carry an N-linked (GlcNAc...) asparagine glycan. EGF-like domains follow at residues 508 to 539, 540 to 570, 572 to 604, 605 to 636, 638 to 671, 672 to 703, 704 to 733, and 734 to 768; these read TLTE…PDCS, RAAC…TECD, PSNQ…DNCE, EVDC…NNCE, LKTM…PDCS, IEVC…VCDL, KACH…EHCT, and VEGC…AGCD. 22 cysteine pairs are disulfide-bonded: Cys-512/Cys-522, Cys-516/Cys-527, Cys-529/Cys-538, Cys-547/Cys-558, Cys-560/Cys-569, Cys-576/Cys-587, Cys-581/Cys-592, Cys-594/Cys-603, Cys-608/Cys-619, Cys-613/Cys-624, Cys-626/Cys-635, Cys-646/Cys-659, Cys-661/Cys-670, Cys-675/Cys-685, Cys-679/Cys-690, Cys-692/Cys-701, Cys-706/Cys-716, Cys-710/Cys-721, Cys-723/Cys-732, Cys-737/Cys-747, Cys-741/Cys-756, and Cys-758/Cys-767. Asn-664 is a glycosylation site (N-linked (GlcNAc...) asparagine). N-linked (GlcNAc...) asparagine glycans are attached at residues Asn-854, Asn-877, and Asn-1048. NHL repeat units lie at residues 1166 to 1192, 1194 to 1238, 1264 to 1308, 1325 to 1365, and 1452 to 1495; these read LLAP…RRIF, SGNV…PKAL, ARCG…NGII, CDNS…ITEN, and CYQT…IRHN. A glycan (N-linked (GlcNAc...) asparagine) is linked at Asn-1196. Residues 1505-1524 form a YD 1 repeat; sequence FEVASPASQELYVFDSNGTH. N-linked (GlcNAc...) asparagine glycosylation is found at Asn-1521 and Asn-1538. 3 YD repeats span residues 1541–1561, 1604–1623, and 1624–1646; these read YSNE…LRVR, YHGN…WTTF, and YDYD…TSLI. Residues Asn-1634, Asn-1671, Asn-1729, and Asn-1814 are each glycosylated (N-linked (GlcNAc...) asparagine). 18 YD repeats span residues 1817-1836, 1858-1876, 1877-1897, 1904-1921, 1922-1943, 1944-1961, 1964-1984, 1987-2007, 2015-2034, 2040-2057, 2058-2084, 2086-2099, 2100-2123, 2126-2146, 2147-2167, 2169-2189, 2201-2221, and 2223-2243; these read YSST…ERVE, YLDK…YIFD, YDLQ…HTMQ, YYRN…VTVD, YSED…VLYK, YRRQ…TRVS, YDET…FICS, YRQI…DGMV, YDNS…TPLP, FDDI…GVIY, YDIN…IKEI, YEIF…ITIQ, YDNM…TKYG, YDVD…WRYN, YDLN…LTPL, YDLR…DEDG, YNSK…TIQY, and YDGL…LQFF. The N-linked (GlcNAc...) asparagine glycan is linked to Asn-1915. Asn-2118 is a glycosylation site (N-linked (GlcNAc...) asparagine). Asn-2258 is a glycosylation site (N-linked (GlcNAc...) asparagine). One copy of the YD 23 repeat lies at 2269-2310; it reads YDLQGHLFAMEISSGEEFYIACDNTGTPLAVFSSNGLLLKQV. Asn-2571 is a glycosylation site (N-linked (GlcNAc...) asparagine).

Belongs to the tenascin family. Teneurin subfamily. Homodimer; disulfide-linked; to mediate homophilic cell adhesion. As to expression, expressed by retinal ganglion cells and their presynaptic amacrine and postsynaptic tectal cell targets.

The protein resides in the cell membrane. Its subcellular location is the cell projection. The protein localises to the axon. Involved in neural development by regulating the establishment of proper connectivity within the nervous system. Acts in both pre- and postsynaptic neurons in the hippocampus to control the assembly of a precise topographic projection: required in both CA1 and subicular neurons for the precise targeting of proximal CA1 axons to distal subiculum, probably by promoting homophilic cell adhesion. Required by retinal ganglion cells for acquisition of their correct morphological and functional connectivity, thereby playing a key role in the development of the visual pathway. In Danio rerio (Zebrafish), this protein is Teneurin-3 (tenm3).